We begin with the raw amino-acid sequence, 337 residues long: MVLLGRSAAELKAWVEAQGQPGYRGQQLHQWLYRKGARSLQEITVFPKQWRAALADVEIGRSEIRYRHDAQDGTVKLLLALADGETIETVGIPSSDRLTVCVSSQVGCPMACDFCATGKGGYRRNLACHEILDQVLTIQSEMGRRVSHVVFMGMGEPLLNLPAVLQAITCLNRDIGIGQRHITISTVGIPQQIQRLAQHQLQTTLAVSLHAPNQALREQLIPSAKHYPLSQLIADCRAYVQQTGRRITFEYTVLAGVNDRPQHAEELAQLLRGFQSHVNLIPYNPIAEAAYQRPTDQHLRQFLSQLQALGVTASIRRSRGLDRQAACGQLRQAQLIA.

E88 serves as the catalytic Proton acceptor. The region spanning S94–D322 is the Radical SAM core domain. Cysteines 101 and 327 form a disulfide. 3 residues coordinate [4Fe-4S] cluster: C108, C112, and C115. S-adenosyl-L-methionine is bound by residues G155–E156, S185, S208–H210, and N284. C327 (S-methylcysteine intermediate) is an active-site residue.

This sequence belongs to the radical SAM superfamily. RlmN family. [4Fe-4S] cluster serves as cofactor.

The protein localises to the cytoplasm. The catalysed reaction is adenosine(2503) in 23S rRNA + 2 reduced [2Fe-2S]-[ferredoxin] + 2 S-adenosyl-L-methionine = 2-methyladenosine(2503) in 23S rRNA + 5'-deoxyadenosine + L-methionine + 2 oxidized [2Fe-2S]-[ferredoxin] + S-adenosyl-L-homocysteine. The enzyme catalyses adenosine(37) in tRNA + 2 reduced [2Fe-2S]-[ferredoxin] + 2 S-adenosyl-L-methionine = 2-methyladenosine(37) in tRNA + 5'-deoxyadenosine + L-methionine + 2 oxidized [2Fe-2S]-[ferredoxin] + S-adenosyl-L-homocysteine. Specifically methylates position 2 of adenine 2503 in 23S rRNA and position 2 of adenine 37 in tRNAs. The chain is Probable dual-specificity RNA methyltransferase RlmN from Thermosynechococcus vestitus (strain NIES-2133 / IAM M-273 / BP-1).